Here is a 293-residue protein sequence, read N- to C-terminus: 33 kDa chaperonin (293 aa).

2 disulfides stabilise this stretch: C236–C238 and C269–C272.

The protein belongs to the HSP33 family. Post-translationally, under oxidizing conditions two disulfide bonds are formed involving the reactive cysteines. Under reducing conditions zinc is bound to the reactive cysteines and the protein is inactive.

It is found in the cytoplasm. Functionally, redox regulated molecular chaperone. Protects both thermally unfolding and oxidatively damaged proteins from irreversible aggregation. Plays an important role in the bacterial defense system toward oxidative stress. This is 33 kDa chaperonin from Lactobacillus delbrueckii subsp. bulgaricus (strain ATCC BAA-365 / Lb-18).